We begin with the raw amino-acid sequence, 538 residues long: Cytochrome P450 18a1 (538 aa).

The helical transmembrane segment at 24–44 threads the bilayer; it reads QHLLMVFLGLLALVTLLQWLV. Cys466 lines the heme pocket.

Belongs to the cytochrome P450 family. It depends on heme as a cofactor. Expressed in body wall (epidermal and muscle cells) and mid- and hind-gut.

Its subcellular location is the endoplasmic reticulum membrane. It is found in the microsome membrane. Its function is as follows. Probably involved in steroid hormones biosynthesis. This is Cytochrome P450 18a1 (Cyp18a1) from Drosophila melanogaster (Fruit fly).